The chain runs to 305 residues: MAREDSVRCLRCLLYALNLLFWLMSISVLGVSAWIRDYLNNVLTLTAETRVEEAVILTYFPVVHPVMIAVCCFLILVGMLGYCGTVKRNLLLLVWYFGSLLVIFCVELACGVWTYEQEITVPVQWSDMITLKARMTNYGLPRYQWLTHAWNFFQREFKCCGVVYFTDWLEMTEMDWPPDSCCVREFPGCSKQAHHEDLSDLYQEGCGKKMYTFLRGTKQLQVLRFLGISIGVTQILAMILTITLLWALYYDRRDPGADQIMSLKNDTSQQLSCHSVELLKPSLTGIFEHTSMANSFNTHFEMEEL.

The Cytoplasmic segment spans residues 1–12 (MAREDSVRCLRC). Residues Cys9 and Cys12 are each lipidated (S-palmitoyl cysteine). Residues 13–33 (LLYALNLLFWLMSISVLGVSA) traverse the membrane as a helical segment. Over 34-59 (WIRDYLNNVLTLTAETRVEEAVILTY) the chain is Extracellular. The helical transmembrane segment at 60 to 80 (FPVVHPVMIAVCCFLILVGML) threads the bilayer. The Cytoplasmic portion of the chain corresponds to 81–89 (GYCGTVKRN). Residue Cys83 is the site of S-palmitoyl cysteine attachment. Residues 90–110 (LLLLVWYFGSLLVIFCVELAC) traverse the membrane as a helical segment. Residues 111 to 224 (GVWTYEQEIT…RGTKQLQVLR (114 aa)) lie on the Extracellular side of the membrane. The helical transmembrane segment at 225–245 (FLGISIGVTQILAMILTITLL) threads the bilayer. The Cytoplasmic portion of the chain corresponds to 246–305 (WALYYDRRDPGADQIMSLKNDTSQQLSCHSVELLKPSLTGIFEHTSMANSFNTHFEMEEL).

Belongs to the tetraspanin (TM4SF) family. As to quaternary structure, component of a complex, at least composed of TSPAN12, FZD4 and norrin (NDP). Post-translationally, palmitoylated; required for interaction with ADAM10. The precise position of palmitoylated residues is unclear and occurs either on Cys-9, Cys-12 and/or Cys-83.

The protein localises to the cell membrane. In terms of biological role, regulator of cell surface receptor signal transduction. Plays a central role in retinal vascularization by regulating norrin (NDP) signal transduction. Acts in concert with norrin (NDP) to promote FZD4 multimerization and subsequent activation of FZD4, leading to promote accumulation of beta-catenin (CTNNB1) and stimulate LEF/TCF-mediated transcriptional programs. Suprisingly, it only activates the norrin (NDP)-dependent activation of FZD4, while it does not activate the Wnt-dependent activation of FZD4, suggesting the existence of a Wnt-independent signaling that also promote accumulation the beta-catenin (CTNNB1). This chain is Tetraspanin-12 (TSPAN12), found in Gallus gallus (Chicken).